A 60-amino-acid polypeptide reads, in one-letter code: MAVQQNRKTRSKRGMRRSHDALTSSTLSTDPTTGEKHRRHHVTADGFYRGRKVVEVGDDE.

Residues 1 to 47 form a disordered region; it reads MAVQQNRKTRSKRGMRRSHDALTSSTLSTDPTTGEKHRRHHVTADGF. Basic residues predominate over residues 7-16; it reads RKTRSKRGMR.

This sequence belongs to the bacterial ribosomal protein bL32 family.

This is Large ribosomal subunit protein bL32 from Teredinibacter turnerae (strain ATCC 39867 / T7901).